Here is a 215-residue protein sequence, read N- to C-terminus: MKILVTGFDPFGGEAINPALEAIKKLPATIHGAEIKCIEVPTVFQKSADVLQQHIESFQPDAVLCIGQAGGRTGLTPERVAINQDDARIPDNEGNQPIDTPIRADGKAAYFSTLPIKAMVAAIHQAGLPASVSNTAGTFVCNHLMYQALYLVDKYCPNAKAGFMHIPFMMEQVVDKPNTAAMNLDDITRGIEAAIFAIVDFKDRSDLKRVGGATH.

Active-site residues include E78, C141, and H165.

Belongs to the peptidase C15 family. Homotetramer.

The protein resides in the cytoplasm. The catalysed reaction is Release of an N-terminal pyroglutamyl group from a polypeptide, the second amino acid generally not being Pro.. Removes 5-oxoproline from various penultimate amino acid residues except L-proline. This chain is Pyrrolidone-carboxylate peptidase (pcp), found in Streptococcus pyogenes serotype M1.